A 188-amino-acid chain; its full sequence is dCTP deaminase (188 aa).

DCTP contacts are provided by residues 111 to 116, 135 to 137, Q156, Y170, and Q180; these read KSTYAR and TLE. The Proton donor/acceptor role is filled by E137.

It belongs to the dCTP deaminase family. In terms of assembly, homotrimer.

It catalyses the reaction dCTP + H2O + H(+) = dUTP + NH4(+). The protein operates within pyrimidine metabolism; dUMP biosynthesis; dUMP from dCTP (dUTP route): step 1/2. Its function is as follows. Catalyzes the deamination of dCTP to dUTP. The sequence is that of dCTP deaminase from Cupriavidus taiwanensis (strain DSM 17343 / BCRC 17206 / CCUG 44338 / CIP 107171 / LMG 19424 / R1) (Ralstonia taiwanensis (strain LMG 19424)).